The following is a 1158-amino-acid chain: ATP-dependent helicase/deoxyribonuclease subunit B (1158 aa).

This sequence belongs to the helicase family. AddB/RexB type 2 subfamily. As to quaternary structure, heterodimer of AddA and RexB. It depends on Mg(2+) as a cofactor.

In terms of biological role, the heterodimer acts as both an ATP-dependent DNA helicase and an ATP-dependent, dual-direction single-stranded exonuclease. Recognizes the chi site generating a DNA molecule suitable for the initiation of homologous recombination. This subunit has 5' -&gt; 3' nuclease activity but not helicase activity. The polypeptide is ATP-dependent helicase/deoxyribonuclease subunit B (Lactobacillus johnsonii (strain CNCM I-12250 / La1 / NCC 533)).